We begin with the raw amino-acid sequence, 334 residues long: snRNA-activating protein complex subunit 2 (334 aa).

2 disordered regions span residues 137 to 200 and 271 to 306; these read LHSK…STEE and AGGSLGPAAEGDGAGSKAPEETPPATEKAEHSELKS. The segment covering 167-180 has biased composition (low complexity); it reads IPSSAPAAPSSAPR.

As to quaternary structure, part of the SNAPc complex composed of 5 subunits: SNAPC1, SNAPC2, SNAPC3, SNAPC4 and SNAPC5. SNAPC2 interacts with TBP and SNAPC4.

It localises to the nucleus. Part of the SNAPc complex required for the transcription of both RNA polymerase II and III small-nuclear RNA genes. Binds to the proximal sequence element (PSE), a non-TATA-box basal promoter element common to these 2 types of genes. Recruits TBP and BRF2 to the U6 snRNA TATA box. The chain is snRNA-activating protein complex subunit 2 (SNAPC2) from Homo sapiens (Human).